The following is a 915-amino-acid chain: Metabotropic glutamate receptor 7 (915 aa).

The signal sequence occupies residues 1–34; the sequence is MVQLGKLLRVLTLMKFPCCVLEVLLCVLAAAARG. The Extracellular segment spans residues 35 to 590; that stretch reads QEMYAPHSIR…IIKLEWHSPW (556 aa). A disulfide bond links C67 and C109. N98 is a glycosylation site (N-linked (GlcNAc...) asparagine). L-glutamate contacts are provided by residues S159, 180-182, Y230, and D314; that span reads AST. 7 disulfide bridges follow: C249/C541, C374/C390, C430/C437, C523/C542, C527/C545, C548/C560, and C563/C576. K407 lines the L-glutamate pocket. N-linked (GlcNAc...) asparagine glycosylation is found at N458 and N486. A glycan (N-linked (GlcNAc...) asparagine) is linked at N572. The chain crosses the membrane as a helical span at residues 591–615; that stretch reads AVIPVFLAMLGIIATIFVMATFIRY. Over 616-627 the chain is Cytoplasmic; that stretch reads NDTPIVRASGRE. Residues 628–648 form a helical membrane-spanning segment; the sequence is LSYVLLTGIFLCYIITFLMIA. The Extracellular portion of the chain corresponds to 649–654; sequence KPDVAV. A helical membrane pass occupies residues 655–675; sequence CSFRRVFLGLGMCISYAALLT. The Cytoplasmic segment spans residues 676 to 702; sequence KTNRIYRIFEQGKKSVTAPRLISPTSQ. A helical transmembrane segment spans residues 703 to 723; the sequence is LAITSSLISVQLLGVFIWFGV. Topologically, residues 724–753 are extracellular; that stretch reads DPPNIIIDYDEHKTMNPEQARGVLKCDITD. Residues 754–775 traverse the membrane as a helical segment; the sequence is LQIICSLGYSILLMVTCTVYAI. At 776–788 the chain is on the cytoplasmic side; the sequence is KTRGVPENFNEAK. Residues 789–810 traverse the membrane as a helical segment; sequence PIGFTMYTTCIVWLAFIPIFFG. Over 811-825 the chain is Extracellular; the sequence is TAQSAEKLYIQTTTL. Residues 826–850 form a helical membrane-spanning segment; the sequence is TISMNLSASVALGMLYMPKVYIIIF. Residues 851-915 lie on the Cytoplasmic side of the membrane; that stretch reads HPELNVQKRK…KYVSYNNLVI (65 aa). The interval 874 to 895 is disordered; sequence SRLSHKPSDRPNGEAKTELCEN. Positions 879–892 are enriched in basic and acidic residues; that stretch reads KPSDRPNGEAKTEL. Phosphoserine is present on S900.

The protein belongs to the G-protein coupled receptor 3 family. In terms of assembly, homodimer. Interacts with PICK1. Widely distributed throughout the brain.

It localises to the cell membrane. Its function is as follows. G-protein coupled receptor activated by glutamate that regulates axon outgrowth through the MAPK-cAMP-PKA signaling pathway during neuronal development. Ligand binding causes a conformation change that triggers signaling via guanine nucleotide-binding proteins (G proteins) and modulates the activity of downstream effectors, such as adenylate cyclase that it inhibits. This is Metabotropic glutamate receptor 7 (Grm7) from Rattus norvegicus (Rat).